Consider the following 548-residue polypeptide: Kinetochore and Eb1-associated basic protein (548 aa).

2 disordered regions span residues M1 to P51 and Y82 to K181. Composition is skewed to basic and acidic residues over residues R20–R29, R104–S116, and P127–S141. Positions Q100–K253 are important for kinetochore and microtubule localization. The span at Q144–R155 shows a compositional bias: polar residues. An SXIP motif 1 motif is present at residues T149 to P152. The segment covering N156–K165 has biased composition (basic and acidic residues). Positions S166 to P175 are enriched in polar residues. The SXIP motif 2 motif lies at T168–P171. The interval S237–K372 is CH (calponin-homology)-like region, which is not required for kinetochore and microtubule localization. Residues Y386–E457 are a coiled coil.

In terms of assembly, interacts with Eb1 via the two SxIP motifs; the interaction is not required for kebab kinetochore localization.

It localises to the cytoplasm. The protein localises to the perinuclear region. Its subcellular location is the chromosome. It is found in the centromere. The protein resides in the kinetochore. It localises to the cytoskeleton. The protein localises to the spindle. The polypeptide is Kinetochore and Eb1-associated basic protein (Drosophila melanogaster (Fruit fly)).